The sequence spans 265 residues: Undecaprenyl-diphosphatase 1 (265 aa).

7 helical membrane-spanning segments follow: residues Ile4 to Ser24, Ala42 to His62, Phe84 to Ile104, Leu108 to Ala128, Ser184 to Leu204, Met217 to Leu237, and Leu245 to Leu265.

The protein belongs to the UppP family.

It localises to the cell membrane. It carries out the reaction di-trans,octa-cis-undecaprenyl diphosphate + H2O = di-trans,octa-cis-undecaprenyl phosphate + phosphate + H(+). In terms of biological role, catalyzes the dephosphorylation of undecaprenyl diphosphate (UPP). Confers resistance to bacitracin. This Bacillus thuringiensis subsp. konkukian (strain 97-27) protein is Undecaprenyl-diphosphatase 1.